Consider the following 397-residue polypeptide: Cathepsin E (397 aa).

A signal peptide spans 1 to 16; the sequence is MKQFLVVLLILSFVHG. The propeptide at 17–49 is activation peptide; that stretch reads IIRVPLKRQKSMRKILKEKGKLSHLWTKQGNEF. The region spanning 74-385 is the Peptidase A1 domain; sequence YFGQISIGTP…DRGNNRVGFA (312 aa). Asp92 is an active-site residue. Residues Cys105 and Cys110 are joined by a disulfide bond. The N-linked (GlcNAc...) asparagine glycan is linked to Asn139. An intrachain disulfide couples Cys268 to Cys272. Asp277 is a catalytic residue. An intrachain disulfide couples Cys310 to Cys344.

This sequence belongs to the peptidase A1 family. Homodimer; disulfide-linked. Post-translationally, glycosylated. Contains high mannose-type oligosaccharide. As to expression, found in the larval foregut and adult stomach.

Its subcellular location is the endosome. It carries out the reaction Similar to cathepsin D, but slightly broader specificity.. In terms of biological role, may have a role in immune function. Probably involved in the processing of antigenic peptides during MHC class II-mediated antigen presentation. This Aquarana catesbeiana (American bullfrog) protein is Cathepsin E (CTSE).